The sequence spans 309 residues: Probable RuBisCO transcriptional regulator (309 aa).

Residues 6-63 (FTLDQLRILKAIVKEGSFKRAADSLYVSQPAISLQIQNLEKQLNIPLFERSNKKATLT) form the HTH lysR-type domain. The segment at residues 23–42 (FKRAADSLYVSQPAISLQIQ) is a DNA-binding region (H-T-H motif).

It belongs to the LysR transcriptional regulatory family.

The protein resides in the plastid. Its subcellular location is the chloroplast. Functionally, trans-acting transcriptional regulator of RuBisCO genes (rbcL and rbcS) expression. This chain is Probable RuBisCO transcriptional regulator (rbcR), found in Gracilaria tenuistipitata var. liui (Red alga).